A 304-amino-acid polypeptide reads, in one-letter code: tRNA dimethylallyltransferase (304 aa).

Position 9-16 (alanine 9–serine 16) interacts with ATP. Threonine 11–serine 16 is a binding site for substrate.

Belongs to the IPP transferase family. As to quaternary structure, monomer. Mg(2+) is required as a cofactor.

It carries out the reaction adenosine(37) in tRNA + dimethylallyl diphosphate = N(6)-dimethylallyladenosine(37) in tRNA + diphosphate. Catalyzes the transfer of a dimethylallyl group onto the adenine at position 37 in tRNAs that read codons beginning with uridine, leading to the formation of N6-(dimethylallyl)adenosine (i(6)A). The polypeptide is tRNA dimethylallyltransferase (Deinococcus geothermalis (strain DSM 11300 / CIP 105573 / AG-3a)).